Reading from the N-terminus, the 248-residue chain is Probable transcriptional regulatory protein RPC_4807 (248 aa).

Residues Met1 to Lys21 are disordered.

It belongs to the TACO1 family.

The protein resides in the cytoplasm. In Rhodopseudomonas palustris (strain BisB18), this protein is Probable transcriptional regulatory protein RPC_4807.